Reading from the N-terminus, the 713-residue chain is Ribosomal RNA large subunit methyltransferase K/L (713 aa).

One can recognise a THUMP domain in the interval 46-157; that stretch reads TAYRICLWSR…RDQATLSLDL (112 aa).

This sequence belongs to the methyltransferase superfamily. RlmKL family.

The protein localises to the cytoplasm. The enzyme catalyses guanosine(2445) in 23S rRNA + S-adenosyl-L-methionine = N(2)-methylguanosine(2445) in 23S rRNA + S-adenosyl-L-homocysteine + H(+). The catalysed reaction is guanosine(2069) in 23S rRNA + S-adenosyl-L-methionine = N(2)-methylguanosine(2069) in 23S rRNA + S-adenosyl-L-homocysteine + H(+). Specifically methylates the guanine in position 2445 (m2G2445) and the guanine in position 2069 (m7G2069) of 23S rRNA. In Syntrophotalea carbinolica (strain DSM 2380 / NBRC 103641 / GraBd1) (Pelobacter carbinolicus), this protein is Ribosomal RNA large subunit methyltransferase K/L.